The sequence spans 295 residues: MDIPSVDVSTATNDGASSRAKGHRSAAPGRRKISDAVYQAELFRLQTEFVKLQEWARHSGARLVVIFEGRDGAGKGGAIKRITEYLNPRVARIAALPAPTDRERGQWYYQRYIAHLPAKGEIVLFDRSWYNRAGVEKVMGFCTPQEYVLFLRQTPIFEQMLIDDGILLRKYWFSVSDAEQLRRFKARRNDPVRQWKLSPMDLESVYRWEDYSRAKDEMMVHTDTPVSPWYVVESDIKKHARLNMMAHLLSTIDYADVEKPKVKLPPRPLVSGNYRRPPRELSTYVDDYVATLIAR.

The tract at residues Met1–Pro28 is disordered. Positions Asp7–Ala16 are enriched in polar residues. A phosphohistidine mark is found at His115 and His247.

The protein belongs to the polyphosphate kinase 2 (PPK2) family. Class I subfamily. In terms of assembly, interacts with Ndk. In terms of processing, autophosphorylated at His-115 and His-247 using polyP as a phosphate donor.

It carries out the reaction [phosphate](n) + GTP = [phosphate](n+1) + GDP. In terms of biological role, uses inorganic polyphosphate (polyP) as a donor to convert GDP to GTP. In addition, modulates nucleotide triphosphate synthesis catalyzed by the nucleoside diphosphate kinase (Ndk) in favor of GTP production over CTP or UTP. Plays an important role in survival of M.tuberculosis in macrophages. The polypeptide is GDP-polyphosphate phosphotransferase (Mycobacterium tuberculosis (strain ATCC 25618 / H37Rv)).